A 253-amino-acid polypeptide reads, in one-letter code: Sulfate transporter CysZ (253 aa).

4 consecutive transmembrane segments (helical) span residues 31–51 (FVIL…WWLF), 72–92 (LSYI…GYFF), 151–171 (IVLL…PVLW), and 222–242 (IPVL…AMWV).

It belongs to the CysZ family.

Its subcellular location is the cell inner membrane. Its function is as follows. High affinity, high specificity proton-dependent sulfate transporter, which mediates sulfate uptake. Provides the sulfur source for the cysteine synthesis pathway. This is Sulfate transporter CysZ from Escherichia fergusonii (strain ATCC 35469 / DSM 13698 / CCUG 18766 / IAM 14443 / JCM 21226 / LMG 7866 / NBRC 102419 / NCTC 12128 / CDC 0568-73).